A 518-amino-acid chain; its full sequence is Probable bifunctional methylthioribulose-1-phosphate dehydratase/enolase-phosphatase E1 (518 aa).

Residues 1–242 (MACCGGGRGE…AIKLYQLGID (242 aa)) are methylthioribulose-1-phosphate dehydratase. C114 provides a ligand contact to substrate. Residues H132 and H134 each contribute to the Zn(2+) site. E157 acts as the Proton donor/acceptor; for methylthioribulose-1-phosphate dehydratase activity in catalysis. Residue H207 coordinates Zn(2+). Residues 279–518 (VVLDIEGTTT…FRTIKSFSEI (240 aa)) form an enolase-phosphatase E1 region. Positions 282 and 284 each coordinate Mg(2+). Substrate-binding positions include 417–418 (SS) and K451. D477 contributes to the Mg(2+) binding site.

The protein in the N-terminal section; belongs to the aldolase class II family. MtnB subfamily. In the C-terminal section; belongs to the HAD-like hydrolase superfamily. MasA/MtnC family. It depends on Zn(2+) as a cofactor. The cofactor is Mg(2+).

The catalysed reaction is 5-(methylsulfanyl)-D-ribulose 1-phosphate = 5-methylsulfanyl-2,3-dioxopentyl phosphate + H2O. It carries out the reaction 5-methylsulfanyl-2,3-dioxopentyl phosphate + H2O = 1,2-dihydroxy-5-(methylsulfanyl)pent-1-en-3-one + phosphate. Its pathway is amino-acid biosynthesis; L-methionine biosynthesis via salvage pathway; L-methionine from S-methyl-5-thio-alpha-D-ribose 1-phosphate: step 2/6. It functions in the pathway amino-acid biosynthesis; L-methionine biosynthesis via salvage pathway; L-methionine from S-methyl-5-thio-alpha-D-ribose 1-phosphate: step 3/6. The protein operates within amino-acid biosynthesis; L-methionine biosynthesis via salvage pathway; L-methionine from S-methyl-5-thio-alpha-D-ribose 1-phosphate: step 4/6. The sequence is that of Probable bifunctional methylthioribulose-1-phosphate dehydratase/enolase-phosphatase E1 from Oryza sativa subsp. indica (Rice).